The following is a 141-amino-acid chain: Hemoglobin subunit alpha-A (141 aa).

Positions 1–141 (VLSAADKANV…VGAVLTAKYR (141 aa)) constitute a Globin domain. O2 is bound at residue histidine 58. Residue histidine 87 participates in heme b binding.

Belongs to the globin family. Heterotetramer of two alpha chains and two beta chains. As to expression, red blood cells.

Its function is as follows. Involved in oxygen transport from the lung to the various peripheral tissues. The sequence is that of Hemoglobin subunit alpha-A (HBAA) from Chloephaga melanoptera (Andean goose).